Reading from the N-terminus, the 339-residue chain is Non-homologous end joining protein Ku (339 aa).

One can recognise a Ku domain in the interval isoleucine 10–threonine 187. Disordered stretches follow at residues aspartate 230–alanine 251 and serine 263–alanine 339. Basic and acidic residues predominate over residues arginine 267 to proline 277. Over residues alanine 278–alanine 289 the composition is skewed to basic residues. Residues arginine 290 to alanine 310 are compositionally biased toward low complexity.

It belongs to the prokaryotic Ku family. As to quaternary structure, homodimer. Interacts with LigD.

Functionally, with LigD forms a non-homologous end joining (NHEJ) DNA repair enzyme, which repairs dsDNA breaks with reduced fidelity. Binds linear dsDNA with 5'- and 3'- overhangs but not closed circular dsDNA nor ssDNA. Recruits and stimulates the ligase activity of LigD. The protein is Non-homologous end joining protein Ku of Cupriavidus necator (strain ATCC 17699 / DSM 428 / KCTC 22496 / NCIMB 10442 / H16 / Stanier 337) (Ralstonia eutropha).